The following is a 469-amino-acid chain: ATP synthase subunit beta (469 aa).

Gly-156–Thr-163 contributes to the ATP binding site.

This sequence belongs to the ATPase alpha/beta chains family. F-type ATPases have 2 components, CF(1) - the catalytic core - and CF(0) - the membrane proton channel. CF(1) has five subunits: alpha(3), beta(3), gamma(1), delta(1), epsilon(1). CF(0) has three main subunits: a(1), b(2) and c(9-12). The alpha and beta chains form an alternating ring which encloses part of the gamma chain. CF(1) is attached to CF(0) by a central stalk formed by the gamma and epsilon chains, while a peripheral stalk is formed by the delta and b chains.

It localises to the cell membrane. The catalysed reaction is ATP + H2O + 4 H(+)(in) = ADP + phosphate + 5 H(+)(out). Functionally, produces ATP from ADP in the presence of a proton gradient across the membrane. The catalytic sites are hosted primarily by the beta subunits. In Bacillus anthracis (strain CDC 684 / NRRL 3495), this protein is ATP synthase subunit beta.